The chain runs to 292 residues: tRNA pseudouridine synthase B (292 aa).

The Nucleophile role is filled by D38.

It belongs to the pseudouridine synthase TruB family. Type 1 subfamily.

The enzyme catalyses uridine(55) in tRNA = pseudouridine(55) in tRNA. Its function is as follows. Responsible for synthesis of pseudouridine from uracil-55 in the psi GC loop of transfer RNAs. The polypeptide is tRNA pseudouridine synthase B (Streptococcus sanguinis (strain SK36)).